A 596-amino-acid polypeptide reads, in one-letter code: Chaperone protein DnaK (596 aa).

Phosphothreonine; by autocatalysis is present on Thr-180.

This sequence belongs to the heat shock protein 70 family.

Acts as a chaperone. The polypeptide is Chaperone protein DnaK (Thermosipho melanesiensis (strain DSM 12029 / CIP 104789 / BI429)).